The primary structure comprises 187 residues: Dihydrofolate reductase 2, mitochondrial (187 aa).

The DHFR domain occupies 4–185 (LLNCIVAVSQ…IKYKFEVCEK (182 aa)). NADP(+) is bound by residues alanine 10 and 16–22 (GIGKNGD). Residue 31 to 36 (EFRYFQ) coordinates substrate. An NADP(+)-binding site is contributed by 55–57 (RKT). Position 71 (arginine 71) interacts with substrate. NADP(+) contacts are provided by residues 77–79 (SRE) and 117–124 (GGSSVYKE).

The protein belongs to the dihydrofolate reductase family. In terms of tissue distribution, expressed in numerous cell lines.

It localises to the mitochondrion. The protein resides in the mitochondrion matrix. The protein localises to the mitochondrion inner membrane. The catalysed reaction is (6S)-5,6,7,8-tetrahydrofolate + NADP(+) = 7,8-dihydrofolate + NADPH + H(+). Its pathway is cofactor biosynthesis; tetrahydrofolate biosynthesis; 5,6,7,8-tetrahydrofolate from 7,8-dihydrofolate: step 1/1. Its function is as follows. Key enzyme in folate metabolism. Contributes to the de novo mitochondrial thymidylate biosynthesis pathway. Required to prevent uracil accumulation in mtDNA. Binds its own mRNA and that of DHFR. The sequence is that of Dihydrofolate reductase 2, mitochondrial from Homo sapiens (Human).